The primary structure comprises 263 residues: Tryptophan synthase alpha chain (263 aa).

Residues Glu49 and Asp60 each act as proton acceptor in the active site.

This sequence belongs to the TrpA family. As to quaternary structure, tetramer of two alpha and two beta chains.

The enzyme catalyses (1S,2R)-1-C-(indol-3-yl)glycerol 3-phosphate + L-serine = D-glyceraldehyde 3-phosphate + L-tryptophan + H2O. It participates in amino-acid biosynthesis; L-tryptophan biosynthesis; L-tryptophan from chorismate: step 5/5. Its function is as follows. The alpha subunit is responsible for the aldol cleavage of indoleglycerol phosphate to indole and glyceraldehyde 3-phosphate. In Cereibacter sphaeroides (strain ATCC 17025 / ATH 2.4.3) (Rhodobacter sphaeroides), this protein is Tryptophan synthase alpha chain.